Reading from the N-terminus, the 396-residue chain is Elongation factor Tu (396 aa).

The tr-type G domain occupies 10–206; that stretch reads KPHVNVGTIG…ALDTYIPTPE (197 aa). A G1 region spans residues 19–26; sequence GHVDHGKT. 19–26 is a binding site for GTP; sequence GHVDHGKT. Residue Thr26 participates in Mg(2+) binding. Positions 60 to 64 are G2; the sequence is GITIN. Positions 81–84 are G3; the sequence is DCPG. Residues 81–85 and 136–139 contribute to the GTP site; these read DCPGH and NKCD. A G4 region spans residues 136–139; sequence NKCD. The tract at residues 174 to 176 is G5; sequence SAK.

This sequence belongs to the TRAFAC class translation factor GTPase superfamily. Classic translation factor GTPase family. EF-Tu/EF-1A subfamily. Monomer.

The protein localises to the cytoplasm. It carries out the reaction GTP + H2O = GDP + phosphate + H(+). Its function is as follows. GTP hydrolase that promotes the GTP-dependent binding of aminoacyl-tRNA to the A-site of ribosomes during protein biosynthesis. In Cupriavidus pinatubonensis (strain JMP 134 / LMG 1197) (Cupriavidus necator (strain JMP 134)), this protein is Elongation factor Tu.